The sequence spans 409 residues: 2,3-bisphosphoglycerate-independent phosphoglycerate mutase 1 (409 aa).

A compositionally biased stretch (basic and acidic residues) spans 163-173 (SDADPKVEGKP). The interval 163 to 184 (SDADPKVEGKPPKKIKALDGSP) is disordered.

Belongs to the BPG-independent phosphoglycerate mutase family. A-PGAM subfamily.

The catalysed reaction is (2R)-2-phosphoglycerate = (2R)-3-phosphoglycerate. It participates in carbohydrate degradation; glycolysis; pyruvate from D-glyceraldehyde 3-phosphate: step 3/5. Its function is as follows. Catalyzes the interconversion of 2-phosphoglycerate and 3-phosphoglycerate. The sequence is that of 2,3-bisphosphoglycerate-independent phosphoglycerate mutase 1 (apgM1) from Methanothermobacter thermautotrophicus (strain ATCC 29096 / DSM 1053 / JCM 10044 / NBRC 100330 / Delta H) (Methanobacterium thermoautotrophicum).